The chain runs to 417 residues: Imidazolonepropionase (417 aa).

The Fe(3+) site is built by His-77 and His-79. Zn(2+) is bound by residues His-77 and His-79. 4-imidazolone-5-propanoate is bound by residues Arg-86, Tyr-149, and His-182. Tyr-149 provides a ligand contact to N-formimidoyl-L-glutamate. Residue His-244 coordinates Fe(3+). His-244 serves as a coordination point for Zn(2+). Position 247 (Glu-247) interacts with 4-imidazolone-5-propanoate. Fe(3+) is bound at residue Asp-323. Residue Asp-323 participates in Zn(2+) binding. Asn-325 is an N-formimidoyl-L-glutamate binding site.

This sequence belongs to the metallo-dependent hydrolases superfamily. HutI family. It depends on Zn(2+) as a cofactor. Fe(3+) is required as a cofactor.

The protein resides in the cytoplasm. The enzyme catalyses 4-imidazolone-5-propanoate + H2O = N-formimidoyl-L-glutamate. It participates in amino-acid degradation; L-histidine degradation into L-glutamate; N-formimidoyl-L-glutamate from L-histidine: step 3/3. Its function is as follows. Catalyzes the hydrolytic cleavage of the carbon-nitrogen bond in imidazolone-5-propanoate to yield N-formimidoyl-L-glutamate. It is the third step in the universal histidine degradation pathway. The polypeptide is Imidazolonepropionase (Halobacterium salinarum (strain ATCC 29341 / DSM 671 / R1)).